The primary structure comprises 629 residues: tRNA uridine 5-carboxymethylaminomethyl modification enzyme MnmG (629 aa).

13–18 serves as a coordination point for FAD; the sequence is GGGHAG. 273-287 is a binding site for NAD(+); the sequence is GPRYCPSIEDKIHRF.

This sequence belongs to the MnmG family. In terms of assembly, homodimer. Heterotetramer of two MnmE and two MnmG subunits. Requires FAD as cofactor.

It localises to the cytoplasm. Its function is as follows. NAD-binding protein involved in the addition of a carboxymethylaminomethyl (cmnm) group at the wobble position (U34) of certain tRNAs, forming tRNA-cmnm(5)s(2)U34. The polypeptide is tRNA uridine 5-carboxymethylaminomethyl modification enzyme MnmG (Shewanella amazonensis (strain ATCC BAA-1098 / SB2B)).